Reading from the N-terminus, the 102-residue chain is Citrate lyase acyl carrier protein (102 aa).

Residue serine 14 is modified to O-(phosphoribosyl dephospho-coenzyme A)serine.

This sequence belongs to the CitD family. In terms of assembly, oligomer with a subunit composition of (alpha,beta,gamma)6.

The protein localises to the cytoplasm. Functionally, covalent carrier of the coenzyme of citrate lyase. This is Citrate lyase acyl carrier protein from Streptococcus equi subsp. equi (strain 4047).